Here is a 493-residue protein sequence, read N- to C-terminus: Glutamate synthase [NADPH] small chain (493 aa).

299–313 (GGGDTGADCVATALR) provides a ligand contact to NADP(+).

The protein belongs to the glutamate synthase family. Aggregate of 4 catalytic active heterodimers, consisting of a large and a small subunit.

It carries out the reaction 2 L-glutamate + NADP(+) = L-glutamine + 2-oxoglutarate + NADPH + H(+). It functions in the pathway amino-acid biosynthesis; L-glutamate biosynthesis via GLT pathway; L-glutamate from 2-oxoglutarate and L-glutamine (NADP(+) route): step 1/1. It participates in energy metabolism; nitrogen metabolism. This is Glutamate synthase [NADPH] small chain (gltB) from Bacillus subtilis (strain 168).